A 171-amino-acid polypeptide reads, in one-letter code: MSDASANGDATEGAAPAAAQLPKMQILGQFIRDLSFENAAVQYGTATQGQPDIQVQVALDARKRTVDNQYDVIMKLKIESKTKDEDAPKSIFLIELEYGGVFLIENIAEQQLHPFLMIECPRMLFPFVRRIISDMTRDGGYPPLNLDQIDFVALYRQQIAARQAQQPVGTA.

It belongs to the SecB family. Homotetramer, a dimer of dimers. One homotetramer interacts with 1 SecA dimer.

It is found in the cytoplasm. One of the proteins required for the normal export of preproteins out of the cell cytoplasm. It is a molecular chaperone that binds to a subset of precursor proteins, maintaining them in a translocation-competent state. It also specifically binds to its receptor SecA. This Jannaschia sp. (strain CCS1) protein is Protein-export protein SecB.